Consider the following 257-residue polypeptide: 5-oxoprolinase subunit A (257 aa).

It belongs to the LamB/PxpA family. In terms of assembly, forms a complex composed of PxpA, PxpB and PxpC.

It catalyses the reaction 5-oxo-L-proline + ATP + 2 H2O = L-glutamate + ADP + phosphate + H(+). Catalyzes the cleavage of 5-oxoproline to form L-glutamate coupled to the hydrolysis of ATP to ADP and inorganic phosphate. The protein is 5-oxoprolinase subunit A of Fusobacterium nucleatum subsp. nucleatum (strain ATCC 25586 / DSM 15643 / BCRC 10681 / CIP 101130 / JCM 8532 / KCTC 2640 / LMG 13131 / VPI 4355).